The sequence spans 535 residues: Alpha-1,3-mannosyl-glycoprotein 4-beta-N-acetylglucosaminyltransferase A (535 aa).

Residues 1–6 (MRLRNG) are Cytoplasmic-facing. Residues 7–27 (TVATVLAFITSFLTLSWYTTW) form a helical; Signal-anchor for type II membrane protein membrane-spanning segment. The Lumenal portion of the chain corresponds to 28–535 (QNGKEKVIAY…NEIHIKKVTN (508 aa)). Residues 31–57 (KEKVIAYQREFLALKERLRIAEHRISQ) are a coiled coil. Asn-77 and Asn-458 each carry an N-linked (GlcNAc...) asparagine glycan. Ser-474 is subject to Phosphoserine.

It belongs to the glycosyltransferase 54 family. A divalent metal cation is required as a cofactor. N-glycosylated. In terms of tissue distribution, highly expressed in small intestine, kidney, lung and spleen. Weakly expressed in brain, heart and liver.

It is found in the golgi apparatus membrane. It localises to the secreted. It catalyses the reaction N(4)-{beta-D-GlcNAc-(1-&gt;2)-alpha-D-Man-(1-&gt;3)-[beta-D-GlcNAc-(1-&gt;2)-alpha-D-Man-(1-&gt;6)]-beta-D-Man-(1-&gt;4)-beta-D-GlcNAc-(1-&gt;4)-beta-D-GlcNAc}-L-asparaginyl-[protein] + UDP-N-acetyl-alpha-D-glucosamine = N(4)-{beta-D-GlcNAc-(1-&gt;2)-[beta-D-GlcNAc-(1-&gt;4)]-alpha-D-Man-(1-&gt;3)-[beta-D-GlcNAc-(1-&gt;2)-alpha-D-Man-(1-&gt;6)]-beta-D-Man-(1-&gt;4)-beta-D-GlcNAc-(1-&gt;4)-beta-D-GlcNAc}-L-asparaginyl-[protein] + UDP + H(+). It carries out the reaction an N(4)-{beta-D-GlcNAc-(1-&gt;2)-alpha-D-Man-(1-&gt;3)-[alpha-D-Man-(1-&gt;6)]-beta-D-Man-(1-&gt;4)-beta-D-GlcNAc-(1-&gt;4)-beta-D-GlcNAc}-L-asparaginyl-[protein] + UDP-N-acetyl-alpha-D-glucosamine = an N(4)-{beta-D-GlcNAc-(1-&gt;2)-[beta-D-GlcNAc-(1-&gt;4)]-alpha-D-Man-(1-&gt;3)-[alpha-D-Man-(1-&gt;6)]-beta-D-Man-(1-&gt;4)-beta-D-GlcNAc-(1-&gt;4)-beta-D-GlcNAc}-L-asparaginyl-[protein] + UDP + H(+). The catalysed reaction is an N(4)-{beta-D-GlcNAc-(1-&gt;2)-alpha-D-Man-(1-&gt;3)-[beta-D-GlcNAc-(1-&gt;2)-[beta-D-GlcNAc-(1-&gt;6)]-alpha-D-Man-(1-&gt;6)]-beta-D-Man-(1-&gt;4)-beta-D-GlcNAc-(1-&gt;4)-beta-D-GlcNAc}-L-asparaginyl-[protein] + UDP-N-acetyl-alpha-D-glucosamine = an N(4)-{beta-D-GlcNAc-(1-&gt;2)-[beta-D-GlcNAc-(1-&gt;4)]-alpha-D-Man-(1-&gt;3)-[beta-D-GlcNAc-(1-&gt;2)-[beta-D-GlcNAc-(1-&gt;6)]-alpha-D-Man-(1-&gt;6)]-beta-D-Man-(1-&gt;4)-beta-D-GlcNAc-(1-&gt;4)-beta-D-GlcNAc}-L-asparaginyl-[protein] + UDP + H(+). The enzyme catalyses an N(4)-{beta-D-GlcNAc-(1-&gt;2)-alpha-D-Man-(1-&gt;3)-[beta-D-GlcNAc-(1-&gt;2)-alpha-D-Man-(1-&gt;6)]-beta-D-Man-(1-&gt;4)-beta-D-GlcNAc-(1-&gt;4)-[alpha-L-Fuc-(1-&gt;6)]-beta-D-GlcNAc}-L-asparaginyl-[protein] + UDP-N-acetyl-alpha-D-glucosamine = N(4)-{beta-D-GlcNAc-(1-&gt;2)-[beta-D-GlcNAc-(1-&gt;4)]-alpha-D-Man-(1-&gt;3)-[beta-D-GlcNAc-(1-&gt;2)-alpha-D-Man-(1-&gt;6)]-beta-D-Man-(1-&gt;4)-beta-D-GlcNAc-(1-&gt;4)-[alpha-L-Fuc-(1-&gt;6)]-beta-D-GlcNAc}-asparaginyl-[protein] + UDP + H(+). It catalyses the reaction an N(4)-{beta-D-GlcNAc-(1-&gt;2)-alpha-D-Man-(1-&gt;3)-[beta-D-Gal-(1-&gt;4)-beta-D-GlcNAc-(1-&gt;2)-alpha-D-Man-(1-&gt;6)]-beta-D-Man-(1-&gt;4)-beta-D-GlcNAc-(1-&gt;4)-beta-D-GlcNAc}-L-asparaginyl-[protein] + UDP-N-acetyl-alpha-D-glucosamine = an N(4)-{beta-D-GlcNAc-(1-&gt;2)-[beta-D-GlcNAc-(1-&gt;4)]-alpha-D-Man-(1-&gt;3)-[beta-D-Gal-(1-&gt;4)-beta-D-GlcNAc-(1-&gt;2)-alpha-D-Man-(1-&gt;6)]-beta-D-Man-(1-&gt;4)-beta-D-GlcNAc-(1-&gt;4)-beta-D-GlcNAc}-L-asparaginyl-[protein] + UDP + H(+). It carries out the reaction N(4)-{beta-D-GlcNAc-(1-&gt;2)-alpha-D-Man-(1-&gt;3)-[alpha-D-Man-(1-&gt;3)-{alpha-D-Man-(1-&gt;6)}-alpha-D-Man-(1-&gt;6)]-beta-D-Man-(1-&gt;4)-beta-D-GlcNAc-(1-&gt;4)-beta-D-GlcNAc}-asparaginyl-[protein] + UDP-N-acetyl-alpha-D-glucosamine = N(4)-{beta-D-GlcNAc-(1-&gt;2)-[beta-D-GlcNAc-(1-&gt;4)]-alpha-D-Man-(1-&gt;3)-[alpha-D-Man-(1-&gt;3)-{alpha-D-Man-(1-&gt;6)}-alpha-D-Man-(1-&gt;6)]-beta-D-Man-(1-&gt;4)-beta-D-GlcNAc-(1-&gt;4)-beta-D-GlcNAc}-asparaginyl-[protein] + UDP + H(+). The catalysed reaction is N(4)-{beta-D-GlcNAc-(1-&gt;2)-alpha-D-Man-(1-&gt;3)-beta-D-Man-(1-&gt;4)-beta-D-GlcNAc-(1-&gt;4)-beta-D-GlcNAc}-asparaginyl-[protein] + UDP-N-acetyl-alpha-D-glucosamine = N(4)-{beta-D-GlcNAc-(1-&gt;2)-[beta-D-GlcNAc-(1-&gt;4)]-alpha-D-Man-(1-&gt;3)-beta-D-Man-(1-&gt;4)-beta-D-GlcNAc-(1-&gt;4)-beta-D-GlcNAc}-asparaginyl-[protein] + UDP + H(+). Its pathway is protein modification; protein glycosylation. Inhibited by UDP. Functionally, glycosyltransferase that catalyze the transfer of GlcNAc from UDP-GlcNAc to the GlcNAcbeta1-2Manalpha1-3 arm of the core structure of N-linked glycans through a beta1-4 linkage and participates in the production of tri- and tetra-antennary N-linked sugar chains. Involved in glucose transport by mediating SLC2A2/GLUT2 glycosylation, thereby controlling cell-surface expression of SLC2A2 in pancreatic beta cells. The protein is Alpha-1,3-mannosyl-glycoprotein 4-beta-N-acetylglucosaminyltransferase A of Bos taurus (Bovine).